A 380-amino-acid chain; its full sequence is Queuine tRNA-ribosyltransferase (380 aa).

The active-site Proton acceptor is the Asp-93. Substrate is bound by residues 93–97, Asp-147, Gln-198, and Gly-225; that span reads DSGGF. Residues 256 to 262 form an RNA binding region; the sequence is GVGLPSN. The Nucleophile role is filled by Asp-275. Positions 280–284 are RNA binding; important for wobble base 34 recognition; the sequence is ARNGR. Residues Cys-313, Cys-315, Cys-318, and His-344 each contribute to the Zn(2+) site.

This sequence belongs to the queuine tRNA-ribosyltransferase family. In terms of assembly, homodimer. Within each dimer, one monomer is responsible for RNA recognition and catalysis, while the other monomer binds to the replacement base PreQ1. It depends on Zn(2+) as a cofactor.

It catalyses the reaction 7-aminomethyl-7-carbaguanine + guanosine(34) in tRNA = 7-aminomethyl-7-carbaguanosine(34) in tRNA + guanine. It participates in tRNA modification; tRNA-queuosine biosynthesis. Catalyzes the base-exchange of a guanine (G) residue with the queuine precursor 7-aminomethyl-7-deazaguanine (PreQ1) at position 34 (anticodon wobble position) in tRNAs with GU(N) anticodons (tRNA-Asp, -Asn, -His and -Tyr). Catalysis occurs through a double-displacement mechanism. The nucleophile active site attacks the C1' of nucleotide 34 to detach the guanine base from the RNA, forming a covalent enzyme-RNA intermediate. The proton acceptor active site deprotonates the incoming PreQ1, allowing a nucleophilic attack on the C1' of the ribose to form the product. After dissociation, two additional enzymatic reactions on the tRNA convert PreQ1 to queuine (Q), resulting in the hypermodified nucleoside queuosine (7-(((4,5-cis-dihydroxy-2-cyclopenten-1-yl)amino)methyl)-7-deazaguanosine). This Clostridium perfringens (strain 13 / Type A) protein is Queuine tRNA-ribosyltransferase.